Reading from the N-terminus, the 305-residue chain is Insulin-like peptide (305 aa).

The N-terminal stretch at 1–22 is a signal peptide; sequence MNLSSVYVLASLAVVCLLVKET. Cystine bridges form between cysteine 28–cysteine 87, cysteine 40–cysteine 100, and cysteine 86–cysteine 91. Residues 52 to 76 constitute a propeptide, connecting peptide; sequence SVSKRAIDFISEQQAKDYMGAMPHI. A d region spans residues 102–114; that stretch reads PYSTAPATATPVR. Residues 102–305 constitute a propeptide, d/E peptide; the sequence is PYSTAPATAT…RDSYHLTELR (204 aa). Over residues 107–118 the composition is skewed to low complexity; it reads PATATPVRTTEP. Disordered regions lie at residues 107 to 130 and 236 to 305; these read PATA…PLDG and HNQT…TELR. The tract at residues 115–305 is e; sequence TTEPQPEEAE…RDSYHLTELR (191 aa). The segment covering 119-128 has biased composition (acidic residues); the sequence is QPEEAEDDPL. Composition is skewed to basic and acidic residues over residues 236–245 and 291–305; these read HNQTDKKEPT and RRIE…TELR.

This sequence belongs to the insulin family.

The protein localises to the secreted. This is Insulin-like peptide (ILP) from Branchiostoma californiense (California lancelet).